The sequence spans 209 residues: MGKCQVISHPLIQHKLSILRRQDTSTKDFRELVNEIAMLMGYEVSRDLPLEDVEIQTPVAKTVQKQLAGKKLAIVPILRAGIGMVDGFLSLVPAAKVGHIGMYRNEETLEPVEYLVKLPEDIDQRQIFIVDPMLATGGSAILAVDSLKKRGAANIKFVCLVAAPEGVKKLQEAHPDVDIYTAALDERLNDHGYIVPGLGDAGDRLFGTK.

5-phospho-alpha-D-ribose 1-diphosphate is bound by residues Arg-79, Arg-104, and 131 to 139 (DPMLATGGS). Residues Ile-194 and 199–201 (GDA) contribute to the uracil site. Asp-200 lines the 5-phospho-alpha-D-ribose 1-diphosphate pocket.

Belongs to the UPRTase family. It depends on Mg(2+) as a cofactor.

The catalysed reaction is UMP + diphosphate = 5-phospho-alpha-D-ribose 1-diphosphate + uracil. Its pathway is pyrimidine metabolism; UMP biosynthesis via salvage pathway; UMP from uracil: step 1/1. Its activity is regulated as follows. Allosterically activated by GTP. Its function is as follows. Catalyzes the conversion of uracil and 5-phospho-alpha-D-ribose 1-diphosphate (PRPP) to UMP and diphosphate. The sequence is that of Uracil phosphoribosyltransferase from Streptococcus equi subsp. zooepidemicus (strain MGCS10565).